The chain runs to 251 residues: Exotoxin type A (251 aa).

The first 30 residues, 1–30 (MENNKKVLKKMVFFVLVTFLGLTISQEVFA), serve as a signal peptide directing secretion. A disulfide bond links cysteine 117 and cysteine 128.

Belongs to the staphylococcal/streptococcal toxin family.

In terms of biological role, causative agent of the symptoms associated with scarlet fever, have been associated with streptococcal toxic shock-like disease and may play a role in the early events of rheumatic fever. This Streptococcus pyogenes serotype M18 (strain MGAS8232) protein is Exotoxin type A (speA).